The following is a 777-amino-acid chain: Penicillin-binding protein 1B (777 aa).

At 1–30 the chain is on the cytoplasmic side; the sequence is MTRKSSNRSRGRKARSGKSASSSKLQIWLG. Residues 31–52 form a helical; Signal-anchor for type II membrane protein membrane-spanning segment; it reads RIWSIGWKLALTLAAVLVFIGI. The Periplasmic portion of the chain corresponds to 53–777; that stretch reads YLDSMIKQRF…TEWIKKLFEW (725 aa). The transglycosylase stretch occupies residues 162–334; sequence LRLEPKLMGM…SYYNPMRYAE (173 aa). Glutamate 200 functions as the Proton donor; for transglycosylase activity in the catalytic mechanism. Residues 415–709 are transpeptidase; the sequence is SKLEQAIHDQ…ASGALRVYAQ (295 aa). The Acyl-ester intermediate; for transpeptidase activity role is filled by serine 476.

This sequence in the N-terminal section; belongs to the glycosyltransferase 51 family. It in the C-terminal section; belongs to the transpeptidase family.

It is found in the cell inner membrane. It carries out the reaction [GlcNAc-(1-&gt;4)-Mur2Ac(oyl-L-Ala-gamma-D-Glu-L-Lys-D-Ala-D-Ala)](n)-di-trans,octa-cis-undecaprenyl diphosphate + beta-D-GlcNAc-(1-&gt;4)-Mur2Ac(oyl-L-Ala-gamma-D-Glu-L-Lys-D-Ala-D-Ala)-di-trans,octa-cis-undecaprenyl diphosphate = [GlcNAc-(1-&gt;4)-Mur2Ac(oyl-L-Ala-gamma-D-Glu-L-Lys-D-Ala-D-Ala)](n+1)-di-trans,octa-cis-undecaprenyl diphosphate + di-trans,octa-cis-undecaprenyl diphosphate + H(+). The catalysed reaction is Preferential cleavage: (Ac)2-L-Lys-D-Ala-|-D-Ala. Also transpeptidation of peptidyl-alanyl moieties that are N-acyl substituents of D-alanine.. The protein operates within cell wall biogenesis; peptidoglycan biosynthesis. Cell wall formation. Synthesis of cross-linked peptidoglycan from the lipid intermediates. The enzyme has a penicillin-insensitive transglycosylase N-terminal domain (formation of linear glycan strands) and a penicillin-sensitive transpeptidase C-terminal domain (cross-linking of the peptide subunits). The chain is Penicillin-binding protein 1B (mrcB) from Vibrio cholerae serotype O1 (strain ATCC 39315 / El Tor Inaba N16961).